The chain runs to 987 residues: Collagen alpha-1(I) chain (987 aa).

The span at 1 to 21 shows a compositional bias: pro residues; sequence SVPGPMGPSGPRGLPGPPGPG. The tract at residues 1-987 is disordered; it reads SVPGPMGPSG…PGPPGPPGPP (987 aa). Residues Pro-15, Pro-18, Pro-20, Pro-29, Pro-32, Pro-35, Pro-50, Pro-65, Pro-71, Pro-80, and Pro-86 each carry the 4-hydroxyproline modification. Low complexity predominate over residues 23–41; it reads QGFQGPPGEPGEPGSSGPM. Basic and acidic residues predominate over residues 53–67; sequence NGDDGEAGKPGRPGE. At Lys-89 the chain carries 5-hydroxylysine; alternate. Lys-89 carries O-linked (Gal...) hydroxylysine; alternate glycosylation. Ser-95 is subject to Phosphoserine. Residues 103–119 show a composition bias toward low complexity; it reads DAGPAGPKGEPGSPGEN. 16 positions are modified to 4-hydroxyproline: Pro-113, Pro-116, Pro-122, Pro-131, Pro-137, Pro-158, Pro-167, Pro-170, Pro-197, Pro-200, Pro-212, Pro-218, Pro-227, Pro-233, Pro-236, and Pro-251. Residues 137–155 show a composition bias toward low complexity; sequence PGASGPAGARGNDGAAGAA. Pro residues predominate over residues 157 to 169; sequence PPGPTGPAGPPGF. Residues 203–253 show a composition bias toward low complexity; the sequence is AGAAGPAGNPGADGQPGAKGANGAPGIAGAPGFPGARGPSGPQGPSGAPGP. At Lys-254 the chain carries 5-hydroxylysine. 4-hydroxyproline occurs at positions 260, 263, 275, 284, 299, 305, 314, and 320. The span at 309-318 shows a compositional bias: gly residues; that stretch reads GERGGPGSRG. At Lys-329 the chain carries 5-hydroxylysine. A 4-hydroxyproline mark is found at Pro-338, Pro-347, Pro-353, Pro-359, Pro-368, Pro-371, Pro-380, Pro-389, Pro-395, Pro-407, Pro-416, Pro-425, Pro-428, Pro-446, Pro-468, Pro-474, Pro-480, Pro-486, Pro-492, Pro-504, Pro-513, Pro-526, Pro-532, and Pro-541. The segment covering 362–388 has biased composition (low complexity); sequence KGLTGSPGSPGPDGKTGPPGPAGQDGR. The span at 397–416 shows a compositional bias: low complexity; sequence ARGQAGVMGFPGPKGAAGEP. Positions 458-483 are enriched in low complexity; the sequence is QGPAPGFQGLPGPAGPPGEAGKPGEQ. At Lys-553 the chain carries 5-hydroxylysine. Pro-559, Pro-574, and Pro-580 each carry 4-hydroxyproline. The span at 586–600 shows a compositional bias: low complexity; it reads SGPSGPAGPTGARGA. Ser-589 carries the phosphoserine modification. Pro-601, Pro-607, Pro-610, Pro-619, Pro-625, Pro-643, Pro-652, and Pro-661 each carry 4-hydroxyproline. A compositionally biased stretch (low complexity) spans 613-640; the sequence is AGFAGPPGADGQPGAKGEPGDAGAKGDA. A compositionally biased stretch (pro residues) spans 642–654; it reads PPGPAGPTGPPGP. Position 664 is a 5-hydroxylysine (Lys-664). The span at 669 to 685 shows a compositional bias: low complexity; it reads SAGPPGATGFPGAAGRV. 4-hydroxyproline occurs at positions 673 and 679. Pro-687 carries the 3-hydroxyproline modification. 16 positions are modified to 4-hydroxyproline: Pro-688, Pro-697, Pro-700, Pro-721, Pro-730, Pro-738, Pro-747, Pro-765, Pro-774, Pro-777, Pro-783, Pro-798, Pro-804, Pro-810, Pro-819, and Pro-825. Over residues 714–723 the composition is skewed to low complexity; the sequence is ETGPAGRPGE. The segment covering 735–747 has biased composition (low complexity); that stretch reads KGSPGADGPAGAP. Positions 797-807 are enriched in pro residues; the sequence is PPGPMGPPGLA. The span at 809 to 824 shows a compositional bias: low complexity; it reads PPGESGREGSPGAEGS. Lys-834 is subject to 5-hydroxylysine. The segment covering 843 to 858 has biased composition (pro residues); it reads AGPPGAPGAPGAPGPV. Residues Pro-846, Pro-849, and Pro-852 each carry the 4-hydroxyproline modification. Positions 879-893 are enriched in low complexity; sequence AGPAGARGPAGPQGP. Over residues 894–905 the composition is skewed to basic and acidic residues; that stretch reads RGDKGETGEQGD. Position 897 is a 5-hydroxylysine (Lys-897). 4 positions are modified to 4-hydroxyproline: Pro-918, Pro-921, Pro-939, and Pro-954. Residues 921-954 are compositionally biased toward low complexity; that stretch reads PGEQGPSGASGPAGPRGPPGSAGSPGKDGLNGLP. Residue Pro-959 is modified to 3-hydroxyproline. Position 960 is a 4-hydroxyproline (Pro-960). Positions 972 to 987 are enriched in pro residues; that stretch reads VGPPGPPGPPGPPGPP. A 3-hydroxyproline modification is found at Pro-974. Position 975 is a 4-hydroxyproline (Pro-975). Pro-977 is subject to 3-hydroxyproline. A 4-hydroxyproline modification is found at Pro-978. Pro-980 carries the 3-hydroxyproline modification. A 4-hydroxyproline mark is found at Pro-981, Pro-984, and Pro-987.

The protein belongs to the fibrillar collagen family. As to quaternary structure, trimers of one alpha 2(I) and two alpha 1(I) chains. Contains mostly 4-hydroxyproline. Proline residues at the third position of the tripeptide repeating unit (G-X-Y) are hydroxylated in some or all of the chains. Post-translationally, contains 3-hydroxyproline at a few sites. This modification occurs on the first proline residue in the sequence motif Gly-Pro-Hyp, where Hyp is 4-hydroxyproline. In terms of processing, lysine residues at the third position of the tripeptide repeating unit (G-X-Y) are 5-hydroxylated in some or all of the chains. O-glycosylated on hydroxylated lysine residues. The O-linked glycan consists of a Glc-Gal disaccharide. In terms of tissue distribution, expressed in bones.

The protein localises to the secreted. The protein resides in the extracellular space. It is found in the extracellular matrix. In terms of biological role, type I collagen is a member of group I collagen (fibrillar forming collagen). The sequence is that of Collagen alpha-1(I) chain from Glossotherium robustum (Ground sloth).